Here is an 820-residue protein sequence, read N- to C-terminus: Phenylalanine--tRNA ligase beta subunit (820 aa).

The 113-residue stretch at 42–154 (KGGLEGLVIG…EDAVPGTLAK (113 aa)) folds into the tRNA-binding domain. Residues 413–489 (AQDFIVELTY…RIYGYNNVEI (77 aa)) enclose the B5 domain. Residues aspartate 467, aspartate 473, glutamate 476, and aspartate 477 each coordinate Mg(2+). Residues 727–820 (SKFPAVKRDL…LEDKLGAKLR (94 aa)) form the FDX-ACB domain.

Belongs to the phenylalanyl-tRNA synthetase beta subunit family. Type 1 subfamily. Tetramer of two alpha and two beta subunits. Requires Mg(2+) as cofactor.

The protein localises to the cytoplasm. The enzyme catalyses tRNA(Phe) + L-phenylalanine + ATP = L-phenylalanyl-tRNA(Phe) + AMP + diphosphate + H(+). The sequence is that of Phenylalanine--tRNA ligase beta subunit from Bacteroides fragilis (strain ATCC 25285 / DSM 2151 / CCUG 4856 / JCM 11019 / LMG 10263 / NCTC 9343 / Onslow / VPI 2553 / EN-2).